The chain runs to 457 residues: tRNA-2-methylthio-N(6)-dimethylallyladenosine synthase (457 aa).

One can recognise an MTTase N-terminal domain in the interval 3 to 120 (KKVYVKTFGC…LPQMIDKRRE (118 aa)). [4Fe-4S] cluster-binding residues include Cys12, Cys49, Cys83, Cys157, Cys161, and Cys164. One can recognise a Radical SAM core domain in the interval 143–377 (RVDGPSAFVS…QATIEENVQR (235 aa)). Residues 380 to 447 (DSMVGKIERI…PHSLRGELVL (68 aa)) form the TRAM domain.

This sequence belongs to the methylthiotransferase family. MiaB subfamily. Monomer. Requires [4Fe-4S] cluster as cofactor.

The protein localises to the cytoplasm. It carries out the reaction N(6)-dimethylallyladenosine(37) in tRNA + (sulfur carrier)-SH + AH2 + 2 S-adenosyl-L-methionine = 2-methylsulfanyl-N(6)-dimethylallyladenosine(37) in tRNA + (sulfur carrier)-H + 5'-deoxyadenosine + L-methionine + A + S-adenosyl-L-homocysteine + 2 H(+). Its function is as follows. Catalyzes the methylthiolation of N6-(dimethylallyl)adenosine (i(6)A), leading to the formation of 2-methylthio-N6-(dimethylallyl)adenosine (ms(2)i(6)A) at position 37 in tRNAs that read codons beginning with uridine. The sequence is that of tRNA-2-methylthio-N(6)-dimethylallyladenosine synthase from Paraburkholderia xenovorans (strain LB400).